The chain runs to 497 residues: 4,4'-diaponeurosporene oxygenase (497 aa).

Position 7–19 (7–19) interacts with FAD; the sequence is VIGGGLGGISAAI.

This sequence belongs to the carotenoid/retinoid oxidoreductase family. CrtP subfamily. Requires FAD as cofactor.

The catalysed reaction is all-trans-4,4'-diaponeurosporene + 2 AH2 + 2 O2 = 4,4'-diaponeurosporenal + 2 A + 3 H2O. It participates in carotenoid biosynthesis; staphyloxanthin biosynthesis; staphyloxanthin from farnesyl diphosphate: step 3/5. In terms of biological role, involved in the biosynthesis of the yellow-orange carotenoid staphyloxanthin, which plays a role in the virulence via its protective function against oxidative stress. Catalyzes the oxidation of the terminal methyl side group of 4,4'-diaponeurosporene to form 4,4'-diaponeurosporen-4-al. In Staphylococcus aureus (strain MW2), this protein is 4,4'-diaponeurosporene oxygenase.